Reading from the N-terminus, the 309-residue chain is Elongation factor Ts (309 aa).

Positions 82 to 85 are involved in Mg(2+) ion dislocation from EF-Tu; sequence TDFV.

Belongs to the EF-Ts family.

It is found in the cytoplasm. Its function is as follows. Associates with the EF-Tu.GDP complex and induces the exchange of GDP to GTP. It remains bound to the aminoacyl-tRNA.EF-Tu.GTP complex up to the GTP hydrolysis stage on the ribosome. The chain is Elongation factor Ts from Rickettsia bellii (strain OSU 85-389).